A 289-amino-acid polypeptide reads, in one-letter code: 4-hydroxy-3-methylbut-2-enyl diphosphate reductase (289 aa).

A [4Fe-4S] cluster-binding site is contributed by Cys12. (2E)-4-hydroxy-3-methylbut-2-enyl diphosphate is bound by residues His44 and His81. His44 and His81 together coordinate dimethylallyl diphosphate. His44 and His81 together coordinate isopentenyl diphosphate. Residue Cys103 coordinates [4Fe-4S] cluster. His130 contacts (2E)-4-hydroxy-3-methylbut-2-enyl diphosphate. His130 lines the dimethylallyl diphosphate pocket. His130 serves as a coordination point for isopentenyl diphosphate. Glu132 acts as the Proton donor in catalysis. (2E)-4-hydroxy-3-methylbut-2-enyl diphosphate is bound at residue Thr174. Cys202 lines the [4Fe-4S] cluster pocket. (2E)-4-hydroxy-3-methylbut-2-enyl diphosphate is bound by residues Ser230, Asn232, and Ser273. The dimethylallyl diphosphate site is built by Ser230, Asn232, and Ser273. Isopentenyl diphosphate is bound by residues Ser230, Asn232, and Ser273.

This sequence belongs to the IspH family. Requires [4Fe-4S] cluster as cofactor.

It catalyses the reaction isopentenyl diphosphate + 2 oxidized [2Fe-2S]-[ferredoxin] + H2O = (2E)-4-hydroxy-3-methylbut-2-enyl diphosphate + 2 reduced [2Fe-2S]-[ferredoxin] + 2 H(+). The enzyme catalyses dimethylallyl diphosphate + 2 oxidized [2Fe-2S]-[ferredoxin] + H2O = (2E)-4-hydroxy-3-methylbut-2-enyl diphosphate + 2 reduced [2Fe-2S]-[ferredoxin] + 2 H(+). It functions in the pathway isoprenoid biosynthesis; dimethylallyl diphosphate biosynthesis; dimethylallyl diphosphate from (2E)-4-hydroxy-3-methylbutenyl diphosphate: step 1/1. Its pathway is isoprenoid biosynthesis; isopentenyl diphosphate biosynthesis via DXP pathway; isopentenyl diphosphate from 1-deoxy-D-xylulose 5-phosphate: step 6/6. Functionally, catalyzes the conversion of 1-hydroxy-2-methyl-2-(E)-butenyl 4-diphosphate (HMBPP) into a mixture of isopentenyl diphosphate (IPP) and dimethylallyl diphosphate (DMAPP). Acts in the terminal step of the DOXP/MEP pathway for isoprenoid precursor biosynthesis. The sequence is that of 4-hydroxy-3-methylbut-2-enyl diphosphate reductase from Treponema denticola (strain ATCC 35405 / DSM 14222 / CIP 103919 / JCM 8153 / KCTC 15104).